We begin with the raw amino-acid sequence, 149 residues long: Ribonuclease pancreatic (149 aa).

A signal peptide spans 1–25 (MGLEKSLMLFPLFVLLLGWVQPSLG). Residues 30-49 (AQKFQRQHMDPAGSSSNSPT) are disordered. Lys32 and Arg35 together coordinate substrate. Catalysis depends on His37, which acts as the Proton acceptor. Disulfide bonds link Cys51/Cys109, Cys65/Cys120, Cys83/Cys135, and Cys90/Cys97. Position 66-70 (66-70 (KPVNT)) interacts with substrate. N-linked (GlcNAc...) asparagine glycosylation is present at Asn87. Lys91 is a binding site for substrate. His144 functions as the Proton donor in the catalytic mechanism.

This sequence belongs to the pancreatic ribonuclease family. As to quaternary structure, monomer. Interacts with and forms tight 1:1 complexes with RNH1. Dimerization of two such complexes may occur. Interaction with RNH1 inhibits this protein. Pancreas.

It localises to the secreted. It carries out the reaction an [RNA] containing cytidine + H2O = an [RNA]-3'-cytidine-3'-phosphate + a 5'-hydroxy-ribonucleotide-3'-[RNA].. The enzyme catalyses an [RNA] containing uridine + H2O = an [RNA]-3'-uridine-3'-phosphate + a 5'-hydroxy-ribonucleotide-3'-[RNA].. Endonuclease that catalyzes the cleavage of RNA on the 3' side of pyrimidine nucleotides. Acts on single-stranded and double-stranded RNA. The chain is Ribonuclease pancreatic (Rnase1) from Mus saxicola (Brown spiny mouse).